The primary structure comprises 577 residues: (E)-beta-farnesene synthase (577 aa).

Asp-327, Asp-331, Asp-474, Ser-478, and Glu-482 together coordinate Mg(2+). Residues 327–331 carry the DDXXD motif motif; that stretch reads DDTFD.

Belongs to the terpene synthase family. Requires Mg(2+) as cofactor. It depends on Co(2+) as a cofactor. The cofactor is Mn(2+). As to expression, expressed in flowers.

The protein localises to the cytoplasm. It carries out the reaction (2E,6E)-farnesyl diphosphate = (E)-beta-farnesene + diphosphate. It functions in the pathway secondary metabolite biosynthesis; terpenoid biosynthesis. With respect to regulation, strongly inhibited by manganese at concentration higher than 20 uM. Sesquiterpene cyclase catalyzing the production of beta-farnesene from farnesyl diphosphate. Unable to use geranyl diphosphate as substrate. This chain is (E)-beta-farnesene synthase (CASC125), found in Artemisia annua (Sweet wormwood).